The chain runs to 578 residues: Proline--tRNA ligase (578 aa).

It belongs to the class-II aminoacyl-tRNA synthetase family. ProS type 1 subfamily. Homodimer.

The protein resides in the cytoplasm. It catalyses the reaction tRNA(Pro) + L-proline + ATP = L-prolyl-tRNA(Pro) + AMP + diphosphate. Catalyzes the attachment of proline to tRNA(Pro) in a two-step reaction: proline is first activated by ATP to form Pro-AMP and then transferred to the acceptor end of tRNA(Pro). As ProRS can inadvertently accommodate and process non-cognate amino acids such as alanine and cysteine, to avoid such errors it has two additional distinct editing activities against alanine. One activity is designated as 'pretransfer' editing and involves the tRNA(Pro)-independent hydrolysis of activated Ala-AMP. The other activity is designated 'posttransfer' editing and involves deacylation of mischarged Ala-tRNA(Pro). The misacylated Cys-tRNA(Pro) is not edited by ProRS. The protein is Proline--tRNA ligase of Burkholderia cenocepacia (strain ATCC BAA-245 / DSM 16553 / LMG 16656 / NCTC 13227 / J2315 / CF5610) (Burkholderia cepacia (strain J2315)).